We begin with the raw amino-acid sequence, 424 residues long: MASSNLIKQLQERGLVAQVTDEEALAERLAQGPIALYCGFDPTADSLHLGHLVPLLCLKRFQQAGHKPVALVGGATGLIGDPSFKAAERKLNTEETVQEWVDKIRKQVAPFLDFDCGENSAIAANNYDWFGNMNVLTFLRDIGKHFSVNQMINKEAVKQRLNREDQGISFTEFSYNLLQGYDFACLNKQYGVVLQIGGSDQWGNITSGIDLTRRLHQNQVFGLTVPLITKADGTKFGKTEGGAVWLDPKKTSPYKFYQFWINTADADVYRFLKFFTFMSIEEINTLEEEDKNSGKAPRAQYVLAEQVTRLVHGEEGLQAAKRITECLFSGSLSALSEADFEQLAQDGVPMVEMEKGADLMQALVDSELQPSRGQARKTIASNAITINGEKQSDPEYFFKEEDRLFGRFTLLRRGKKNYCLICWK.

L-tyrosine is bound at residue tyrosine 37. The 'HIGH' region motif lies at 42–51 (PTADSLHLGH). Lysine 144 is subject to N6-acetyllysine. 2 residues coordinate L-tyrosine: tyrosine 175 and glutamine 179. The 'KMSKS' region signature appears at 235-239 (KFGKT). Lysine 238 contacts ATP. Positions 357-414 (ADLMQALVDSELQPSRGQARKTIASNAITINGEKQSDPEYFFKEEDRLFGRFTLLRRG) constitute an S4 RNA-binding domain.

This sequence belongs to the class-I aminoacyl-tRNA synthetase family. TyrS type 1 subfamily. As to quaternary structure, homodimer.

Its subcellular location is the cytoplasm. The catalysed reaction is tRNA(Tyr) + L-tyrosine + ATP = L-tyrosyl-tRNA(Tyr) + AMP + diphosphate + H(+). Functionally, catalyzes the attachment of tyrosine to tRNA(Tyr) in a two-step reaction: tyrosine is first activated by ATP to form Tyr-AMP and then transferred to the acceptor end of tRNA(Tyr). The chain is Tyrosine--tRNA ligase from Escherichia coli O8 (strain IAI1).